Reading from the N-terminus, the 938-residue chain is Isoleucine--tRNA ligase (938 aa).

Residues 58–68 (PYANGNIHIGH) carry the 'HIGH' region motif. Glutamate 561 contacts L-isoleucyl-5'-AMP. The 'KMSKS' region motif lies at 602 to 606 (KMSKS). Lysine 605 lines the ATP pocket. Cysteine 901, cysteine 904, cysteine 921, and cysteine 924 together coordinate Zn(2+).

This sequence belongs to the class-I aminoacyl-tRNA synthetase family. IleS type 1 subfamily. In terms of assembly, monomer. It depends on Zn(2+) as a cofactor.

It is found in the cytoplasm. It catalyses the reaction tRNA(Ile) + L-isoleucine + ATP = L-isoleucyl-tRNA(Ile) + AMP + diphosphate. Functionally, catalyzes the attachment of isoleucine to tRNA(Ile). As IleRS can inadvertently accommodate and process structurally similar amino acids such as valine, to avoid such errors it has two additional distinct tRNA(Ile)-dependent editing activities. One activity is designated as 'pretransfer' editing and involves the hydrolysis of activated Val-AMP. The other activity is designated 'posttransfer' editing and involves deacylation of mischarged Val-tRNA(Ile). This is Isoleucine--tRNA ligase from Yersinia enterocolitica serotype O:8 / biotype 1B (strain NCTC 13174 / 8081).